The chain runs to 92 residues: N(2)-fixation sustaining protein CowN (92 aa).

Belongs to the CowN family.

Functionally, is required to sustain N(2)-dependent growth in the presence of low levels of carbon monoxide (CO). Probably acts by protecting the N(2) fixation ability of the nitrogenase complex, which is inactivated in the presence of CO. This Rhodopseudomonas palustris (strain BisA53) protein is N(2)-fixation sustaining protein CowN.